Consider the following 124-residue polypeptide: UPF0231 protein Sputcn32_0682 (124 aa).

The protein belongs to the UPF0231 family.

The chain is UPF0231 protein Sputcn32_0682 from Shewanella putrefaciens (strain CN-32 / ATCC BAA-453).